A 247-amino-acid chain; its full sequence is Triosephosphate isomerase (247 aa).

Substrate-binding residues include Asn10 and Lys12. Catalysis depends on His95, which acts as the Electrophile. Glu165 acts as the Proton acceptor in catalysis.

The protein belongs to the triosephosphate isomerase family. In terms of assembly, homodimer.

The catalysed reaction is D-glyceraldehyde 3-phosphate = dihydroxyacetone phosphate. Its pathway is carbohydrate biosynthesis; gluconeogenesis. It participates in carbohydrate degradation; glycolysis; D-glyceraldehyde 3-phosphate from glycerone phosphate: step 1/1. The chain is Triosephosphate isomerase (TPI1) from Yarrowia lipolytica (strain CLIB 122 / E 150) (Yeast).